The sequence spans 219 residues: Protein-L-isoaspartate O-methyltransferase (219 aa).

The active site involves Ser67.

It belongs to the methyltransferase superfamily. L-isoaspartyl/D-aspartyl protein methyltransferase family.

The protein resides in the cytoplasm. The enzyme catalyses [protein]-L-isoaspartate + S-adenosyl-L-methionine = [protein]-L-isoaspartate alpha-methyl ester + S-adenosyl-L-homocysteine. In terms of biological role, catalyzes the methyl esterification of L-isoaspartyl residues in peptides and proteins that result from spontaneous decomposition of normal L-aspartyl and L-asparaginyl residues. It plays a role in the repair and/or degradation of damaged proteins. In Cereibacter sphaeroides (strain ATCC 17029 / ATH 2.4.9) (Rhodobacter sphaeroides), this protein is Protein-L-isoaspartate O-methyltransferase.